A 388-amino-acid chain; its full sequence is Succinate--CoA ligase [ADP-forming] subunit beta (388 aa).

In terms of domain architecture, ATP-grasp spans 9–244 (KQLFAEYGLP…PSQDDAREAH (236 aa)). ATP is bound by residues Lys-46, 53–55 (GRG), Glu-99, Thr-102, and Glu-107. Residues Asn-199 and Asp-213 each coordinate Mg(2+). Substrate-binding positions include Asn-264 and 321 to 323 (GIV).

It belongs to the succinate/malate CoA ligase beta subunit family. In terms of assembly, heterotetramer of two alpha and two beta subunits. Requires Mg(2+) as cofactor.

It catalyses the reaction succinate + ATP + CoA = succinyl-CoA + ADP + phosphate. It carries out the reaction GTP + succinate + CoA = succinyl-CoA + GDP + phosphate. Its pathway is carbohydrate metabolism; tricarboxylic acid cycle; succinate from succinyl-CoA (ligase route): step 1/1. Its function is as follows. Succinyl-CoA synthetase functions in the citric acid cycle (TCA), coupling the hydrolysis of succinyl-CoA to the synthesis of either ATP or GTP and thus represents the only step of substrate-level phosphorylation in the TCA. The beta subunit provides nucleotide specificity of the enzyme and binds the substrate succinate, while the binding sites for coenzyme A and phosphate are found in the alpha subunit. The sequence is that of Succinate--CoA ligase [ADP-forming] subunit beta from Pseudomonas paraeruginosa (strain DSM 24068 / PA7) (Pseudomonas aeruginosa (strain PA7)).